Here is a 162-residue protein sequence, read N- to C-terminus: Phenazine biosynthesis protein PhzB 2 (162 aa).

Thr91 is subject to Phosphothreonine.

The protein belongs to the PhzA/PhzB family.

Functionally, involved in the biosynthesis of the antibiotic phenazine, a nitrogen-containing heterocyclic molecule having important roles in virulence, competition and biological control. In Pseudomonas aeruginosa (strain UCBPP-PA14), this protein is Phenazine biosynthesis protein PhzB 2 (phzB2).